Reading from the N-terminus, the 67-residue chain is DNA-directed RNA polymerase subunit omega (67 aa).

Belongs to the RNA polymerase subunit omega family. As to quaternary structure, the RNAP catalytic core consists of 2 alpha, 1 beta, 1 beta' and 1 omega subunit. When a sigma factor is associated with the core the holoenzyme is formed, which can initiate transcription.

It catalyses the reaction RNA(n) + a ribonucleoside 5'-triphosphate = RNA(n+1) + diphosphate. Promotes RNA polymerase assembly. Latches the N- and C-terminal regions of the beta' subunit thereby facilitating its interaction with the beta and alpha subunits. The polypeptide is DNA-directed RNA polymerase subunit omega (Ralstonia pickettii (strain 12J)).